A 661-amino-acid chain; its full sequence is COBRA-like protein 7 (661 aa).

Residues 1–26 form the signal peptide; that stretch reads MDSAPNFIPRLLLLSLLIVSIPLTSS. A disordered region spans residues 26–45; the sequence is SQSDANTTNPSPSPPSDSDL. 14 N-linked (GlcNAc...) asparagine glycosylation sites follow: Asn31, Asn64, Asn122, Asn170, Asn314, Asn327, Asn356, Asn369, Asn398, Asn410, Asn430, Asn472, Asn551, and Asn561. The GPI-anchor amidated serine moiety is linked to residue Ser637. Positions 638–661 are cleaved as a propeptide — removed in mature form; the sequence is SQHRKHISVFLLALPVLALLILRA.

The protein belongs to the COBRA family. Expressed in roots, stems, leaves, flowers and siliques.

It localises to the cell membrane. The protein is COBRA-like protein 7 (COBL7) of Arabidopsis thaliana (Mouse-ear cress).